We begin with the raw amino-acid sequence, 186 residues long: MMELQGKFLIAMPHLDDYFNRTVVFMCEHNEQGSMGLVINQPTDLSIAELYSKLNFMMKNDRTFGNEMVVAGGPVHTERGFILHKNTLNAFQHTYKVTKELSMTTSADVVETLGSTFAPEKYLVALGCSSWGAGQLEKEIRDNAWLVVSSNDQILFDMPYEDRYAAANQLLGIHPYNFALAQVGHS.

It belongs to the UPF0301 (AlgH) family.

The protein is UPF0301 protein NTHI0415 of Haemophilus influenzae (strain 86-028NP).